A 263-amino-acid polypeptide reads, in one-letter code: 4-hydroxy-tetrahydrodipicolinate reductase (263 aa).

NAD(+)-binding positions include 8 to 13, Asp34, 99 to 101, and 125 to 128; these read GASGRM, GTT, and SPNY. The Proton donor/acceptor role is filled by His157. His158 contributes to the (S)-2,3,4,5-tetrahydrodipicolinate binding site. The active-site Proton donor is the Lys161. 167–168 is a binding site for (S)-2,3,4,5-tetrahydrodipicolinate; it reads GT.

It belongs to the DapB family.

The protein localises to the cytoplasm. The catalysed reaction is (S)-2,3,4,5-tetrahydrodipicolinate + NAD(+) + H2O = (2S,4S)-4-hydroxy-2,3,4,5-tetrahydrodipicolinate + NADH + H(+). It carries out the reaction (S)-2,3,4,5-tetrahydrodipicolinate + NADP(+) + H2O = (2S,4S)-4-hydroxy-2,3,4,5-tetrahydrodipicolinate + NADPH + H(+). The protein operates within amino-acid biosynthesis; L-lysine biosynthesis via DAP pathway; (S)-tetrahydrodipicolinate from L-aspartate: step 4/4. Functionally, catalyzes the conversion of 4-hydroxy-tetrahydrodipicolinate (HTPA) to tetrahydrodipicolinate. The sequence is that of 4-hydroxy-tetrahydrodipicolinate reductase from Methanococcoides burtonii (strain DSM 6242 / NBRC 107633 / OCM 468 / ACE-M).